Here is a 323-residue protein sequence, read N- to C-terminus: Glyoxylate/hydroxypyruvate reductase B (323 aa).

Catalysis depends on residues Arg237 and Glu266. His285 acts as the Proton donor in catalysis.

Belongs to the D-isomer specific 2-hydroxyacid dehydrogenase family. GhrB subfamily. As to quaternary structure, homodimer.

It localises to the cytoplasm. The enzyme catalyses glycolate + NADP(+) = glyoxylate + NADPH + H(+). The catalysed reaction is (R)-glycerate + NAD(+) = 3-hydroxypyruvate + NADH + H(+). It carries out the reaction (R)-glycerate + NADP(+) = 3-hydroxypyruvate + NADPH + H(+). Functionally, catalyzes the NADPH-dependent reduction of glyoxylate and hydroxypyruvate into glycolate and glycerate, respectively. This is Glyoxylate/hydroxypyruvate reductase B from Klebsiella pneumoniae (strain 342).